The chain runs to 481 residues: Proline--tRNA ligase (481 aa).

The protein belongs to the class-II aminoacyl-tRNA synthetase family. ProS type 3 subfamily. Homodimer.

The protein localises to the cytoplasm. It catalyses the reaction tRNA(Pro) + L-proline + ATP = L-prolyl-tRNA(Pro) + AMP + diphosphate. In terms of biological role, catalyzes the attachment of proline to tRNA(Pro) in a two-step reaction: proline is first activated by ATP to form Pro-AMP and then transferred to the acceptor end of tRNA(Pro). Can inadvertently accommodate and process cysteine. Misacylated Cys-tRNA(Pro) is not edited by ProRS; this function may be provided by ProX. The protein is Proline--tRNA ligase (proS) of Acetoanaerobium sticklandii (strain ATCC 12662 / DSM 519 / JCM 1433 / CCUG 9281 / NCIMB 10654 / HF) (Clostridium sticklandii).